We begin with the raw amino-acid sequence, 101 residues long: Small ribosomal subunit protein bS6 (101 aa).

The protein belongs to the bacterial ribosomal protein bS6 family. As to quaternary structure, part of the 30S ribosomal subunit. Forms a tight heterodimer with protein bS18.

In terms of biological role, located on the outer edge of the platform on the body of the 30S subunit. This is Small ribosomal subunit protein bS6 (rpsF) from Thermus thermophilus (strain ATCC BAA-163 / DSM 7039 / HB27).